Reading from the N-terminus, the 257-residue chain is Aspartate/glutamate leucyltransferase (257 aa).

This sequence belongs to the R-transferase family. Bpt subfamily.

It is found in the cytoplasm. The enzyme catalyses N-terminal L-glutamyl-[protein] + L-leucyl-tRNA(Leu) = N-terminal L-leucyl-L-glutamyl-[protein] + tRNA(Leu) + H(+). It carries out the reaction N-terminal L-aspartyl-[protein] + L-leucyl-tRNA(Leu) = N-terminal L-leucyl-L-aspartyl-[protein] + tRNA(Leu) + H(+). Its function is as follows. Functions in the N-end rule pathway of protein degradation where it conjugates Leu from its aminoacyl-tRNA to the N-termini of proteins containing an N-terminal aspartate or glutamate. The polypeptide is Aspartate/glutamate leucyltransferase (Nitrobacter winogradskyi (strain ATCC 25391 / DSM 10237 / CIP 104748 / NCIMB 11846 / Nb-255)).